The sequence spans 409 residues: MKRVFLMILDSLGIGSSVDACKFNDSGADTLGHIAEKCFFNEANVQRRGSLYIPNLIKLGIVKSYQSSTGKYLLGFNQKEDANIIASYGYASELSSGKDTTSGHWEIAGAPFLKDWYYFKEKDNSFPSSLINKIITKLKLPGILGNCHASGTEIIKILGEEHIKTGKPIFYTSCDSVFQIACHEIKFGLSNLYKICENIREILDQNKYQVARVIARPFIGTNKSNFNRTGNRRDISMKPLSITFMEKLIQEKQGKVIAIGKISDIYAGVGISKNIKSTGLYELCHTTIHQMKSAKNNTVIFTNFVDFDSVWGHRRDVSGYAKGLEFFDSKLSEMIDLVKEGDLFILTADHGCDPTWKGTDHTRENVPILIYSPGEEIKFLGHRDTFSDIGQTIAKYFSLSDMKYGKSMF.

Residues Asp10, Asp308, His313, Asp349, His350, and His361 each contribute to the Mn(2+) site.

Belongs to the phosphopentomutase family. It depends on Mn(2+) as a cofactor.

Its subcellular location is the cytoplasm. The enzyme catalyses 2-deoxy-alpha-D-ribose 1-phosphate = 2-deoxy-D-ribose 5-phosphate. It catalyses the reaction alpha-D-ribose 1-phosphate = D-ribose 5-phosphate. Its pathway is carbohydrate degradation; 2-deoxy-D-ribose 1-phosphate degradation; D-glyceraldehyde 3-phosphate and acetaldehyde from 2-deoxy-alpha-D-ribose 1-phosphate: step 1/2. Functionally, isomerase that catalyzes the conversion of deoxy-ribose 1-phosphate (dRib-1-P) and ribose 1-phosphate (Rib-1-P) to deoxy-ribose 5-phosphate (dRib-5-P) and ribose 5-phosphate (Rib-5-P), respectively. The polypeptide is Phosphopentomutase (Buchnera aphidicola subsp. Schizaphis graminum (strain Sg)).